A 337-amino-acid chain; its full sequence is 4-hydroxy-3-methylbut-2-enyl diphosphate reductase (337 aa).

Cysteine 38 is a [4Fe-4S] cluster binding site. Residues histidine 67 and histidine 100 each coordinate (2E)-4-hydroxy-3-methylbut-2-enyl diphosphate. Dimethylallyl diphosphate-binding residues include histidine 67 and histidine 100. Histidine 67 and histidine 100 together coordinate isopentenyl diphosphate. Cysteine 122 contributes to the [4Fe-4S] cluster binding site. Histidine 150 contacts (2E)-4-hydroxy-3-methylbut-2-enyl diphosphate. Histidine 150 contacts dimethylallyl diphosphate. Histidine 150 lines the isopentenyl diphosphate pocket. Catalysis depends on glutamate 152, which acts as the Proton donor. Threonine 190 contacts (2E)-4-hydroxy-3-methylbut-2-enyl diphosphate. Cysteine 220 is a binding site for [4Fe-4S] cluster. Positions 248, 249, 250, and 293 each coordinate (2E)-4-hydroxy-3-methylbut-2-enyl diphosphate. Residues serine 248, serine 249, asparagine 250, and serine 293 each contribute to the dimethylallyl diphosphate site. Isopentenyl diphosphate is bound by residues serine 248, serine 249, asparagine 250, and serine 293.

The protein belongs to the IspH family. It depends on [4Fe-4S] cluster as a cofactor.

It catalyses the reaction isopentenyl diphosphate + 2 oxidized [2Fe-2S]-[ferredoxin] + H2O = (2E)-4-hydroxy-3-methylbut-2-enyl diphosphate + 2 reduced [2Fe-2S]-[ferredoxin] + 2 H(+). The enzyme catalyses dimethylallyl diphosphate + 2 oxidized [2Fe-2S]-[ferredoxin] + H2O = (2E)-4-hydroxy-3-methylbut-2-enyl diphosphate + 2 reduced [2Fe-2S]-[ferredoxin] + 2 H(+). It functions in the pathway isoprenoid biosynthesis; dimethylallyl diphosphate biosynthesis; dimethylallyl diphosphate from (2E)-4-hydroxy-3-methylbutenyl diphosphate: step 1/1. Its pathway is isoprenoid biosynthesis; isopentenyl diphosphate biosynthesis via DXP pathway; isopentenyl diphosphate from 1-deoxy-D-xylulose 5-phosphate: step 6/6. Its function is as follows. Catalyzes the conversion of 1-hydroxy-2-methyl-2-(E)-butenyl 4-diphosphate (HMBPP) into a mixture of isopentenyl diphosphate (IPP) and dimethylallyl diphosphate (DMAPP). Acts in the terminal step of the DOXP/MEP pathway for isoprenoid precursor biosynthesis. The chain is 4-hydroxy-3-methylbut-2-enyl diphosphate reductase from Mycolicibacterium vanbaalenii (strain DSM 7251 / JCM 13017 / BCRC 16820 / KCTC 9966 / NRRL B-24157 / PYR-1) (Mycobacterium vanbaalenii).